The following is a 349-amino-acid chain: MTKLRKIIHIDMDYFFAQVEEKANPSLKDKPFAVGGTNPKRGVISTCNYIAREYGVRSAMPTAIAMQKCPNLILLNTDFAKYKAASAVIRDIFYYFTDKVEPLSLDEAYLDVTDVKEYKNSATLIAQAIKQEIFNKTGLTGSAGVAPNKLLAKIASDINKPNGLYVVTPKQVDSFVKDLPVKKLFGVGKVSQEKLKSMGVETCLDLQQLSLATLVDKFGKFGSSLYNYARGIDNREVNPVRIRKSVSVENTYLEDLKTLGACLEKLPSLYDKLTSRMTEEHYKSIIGIVVKFTDTKFNKTSLTRVAKILDKEMLKNLIIELHQKRNHPIRLIGIGVKLGEIDDKQMDLF.

The region spanning 7–188 (IIHIDMDYFF…LPVKKLFGVG (182 aa)) is the UmuC domain. Mg(2+)-binding residues include D11 and D106. Residue E107 is part of the active site.

It belongs to the DNA polymerase type-Y family. In terms of assembly, monomer. Mg(2+) is required as a cofactor.

The protein localises to the cytoplasm. It carries out the reaction DNA(n) + a 2'-deoxyribonucleoside 5'-triphosphate = DNA(n+1) + diphosphate. In terms of biological role, poorly processive, error-prone DNA polymerase involved in untargeted mutagenesis. Copies undamaged DNA at stalled replication forks, which arise in vivo from mismatched or misaligned primer ends. These misaligned primers can be extended by PolIV. Exhibits no 3'-5' exonuclease (proofreading) activity. May be involved in translesional synthesis, in conjunction with the beta clamp from PolIII. This Francisella tularensis subsp. holarctica (strain OSU18) protein is DNA polymerase IV.